An 81-amino-acid chain; its full sequence is ATP synthase subunit c, chloroplastic (81 aa).

2 helical membrane passes run 3 to 23 and 53 to 73; these read PLIS…ASIG and LLLS…VALA.

This sequence belongs to the ATPase C chain family. As to quaternary structure, F-type ATPases have 2 components, F(1) - the catalytic core - and F(0) - the membrane proton channel. F(1) has five subunits: alpha(3), beta(3), gamma(1), delta(1), epsilon(1). F(0) has four main subunits: a(1), b(1), b'(1) and c(10-14). The alpha and beta chains form an alternating ring which encloses part of the gamma chain. F(1) is attached to F(0) by a central stalk formed by the gamma and epsilon chains, while a peripheral stalk is formed by the delta, b and b' chains.

It is found in the plastid. The protein localises to the chloroplast thylakoid membrane. In terms of biological role, f(1)F(0) ATP synthase produces ATP from ADP in the presence of a proton or sodium gradient. F-type ATPases consist of two structural domains, F(1) containing the extramembraneous catalytic core and F(0) containing the membrane proton channel, linked together by a central stalk and a peripheral stalk. During catalysis, ATP synthesis in the catalytic domain of F(1) is coupled via a rotary mechanism of the central stalk subunits to proton translocation. Key component of the F(0) channel; it plays a direct role in translocation across the membrane. A homomeric c-ring of between 10-14 subunits forms the central stalk rotor element with the F(1) delta and epsilon subunits. This is ATP synthase subunit c, chloroplastic from Angiopteris evecta (Mule's foot fern).